The sequence spans 404 residues: Glycerol-1-phosphate dehydrogenase [NAD(P)+] (404 aa).

NAD(+)-binding positions include aspartate 56, 118–122, and 140–143; these read GTIHD and TAPS. Aspartate 145 lines the substrate pocket. Residue serine 149 coordinates NAD(+). Residue aspartate 192 coordinates substrate. Ni(2+) is bound by residues aspartate 192 and histidine 272. Residue histidine 276 participates in substrate binding. Residue histidine 292 participates in Ni(2+) binding.

This sequence belongs to the glycerol-1-phosphate dehydrogenase family. In terms of assembly, homodimer. Ni(2+) serves as cofactor.

It localises to the cytoplasm. The enzyme catalyses sn-glycerol 1-phosphate + NAD(+) = dihydroxyacetone phosphate + NADH + H(+). It catalyses the reaction sn-glycerol 1-phosphate + NADP(+) = dihydroxyacetone phosphate + NADPH + H(+). In terms of biological role, catalyzes the NAD(P)H-dependent reduction of dihydroxyacetonephosphate (DHAP or glycerone phosphate) to glycerol 1-phosphate (G1P). The G1P thus generated is probably used for the synthesis of phosphoglycerolipids in Gram-positive bacterial species. The chain is Glycerol-1-phosphate dehydrogenase [NAD(P)+] from Geobacillus stearothermophilus (Bacillus stearothermophilus).